The following is a 560-amino-acid chain: DNA ligase B (560 aa).

The active-site N6-AMP-lysine intermediate is K124.

It belongs to the NAD-dependent DNA ligase family. LigB subfamily.

The enzyme catalyses NAD(+) + (deoxyribonucleotide)n-3'-hydroxyl + 5'-phospho-(deoxyribonucleotide)m = (deoxyribonucleotide)n+m + AMP + beta-nicotinamide D-nucleotide.. Catalyzes the formation of phosphodiester linkages between 5'-phosphoryl and 3'-hydroxyl groups in double-stranded DNA using NAD as a coenzyme and as the energy source for the reaction. This chain is DNA ligase B, found in Escherichia coli O139:H28 (strain E24377A / ETEC).